The following is a 162-amino-acid chain: Large ribosomal subunit protein uL10 (162 aa).

The protein belongs to the universal ribosomal protein uL10 family. In terms of assembly, part of the ribosomal stalk of the 50S ribosomal subunit. The N-terminus interacts with L11 and the large rRNA to form the base of the stalk. The C-terminus forms an elongated spine to which L12 dimers bind in a sequential fashion forming a multimeric L10(L12)X complex.

Forms part of the ribosomal stalk, playing a central role in the interaction of the ribosome with GTP-bound translation factors. The protein is Large ribosomal subunit protein uL10 of Vibrio parahaemolyticus serotype O3:K6 (strain RIMD 2210633).